A 353-amino-acid polypeptide reads, in one-letter code: Photosystem II protein D1 (353 aa).

Thr2 bears the N-acetylthreonine mark. Thr2 bears the Phosphothreonine mark. 3 helical membrane-spanning segments follow: residues 29–46 (YIGW…TATS), 118–133 (HFLL…EWEL), and 142–156 (WIAV…AATA). Chlorophyll a is bound at residue His118. Tyr126 is a binding site for pheophytin a. [CaMn4O5] cluster is bound by residues Asp170 and Glu189. Residues 197–218 (FHMLGVAGVFGGSLFSAMHGSL) traverse the membrane as a helical segment. A chlorophyll a-binding site is contributed by His198. A quinone contacts are provided by residues His215 and 264 to 265 (SF). Residue His215 participates in Fe cation binding. Residue His272 participates in Fe cation binding. Residues 274–288 (FLAAWPVVGIWFTAL) traverse the membrane as a helical segment. Residues His332, Glu333, Asp342, and Ala344 each contribute to the [CaMn4O5] cluster site. A propeptide spanning residues 345–353 (AIDAPSING) is cleaved from the precursor.

The protein belongs to the reaction center PufL/M/PsbA/D family. PSII is composed of 1 copy each of membrane proteins PsbA, PsbB, PsbC, PsbD, PsbE, PsbF, PsbH, PsbI, PsbJ, PsbK, PsbL, PsbM, PsbT, PsbX, PsbY, PsbZ, Psb30/Ycf12, at least 3 peripheral proteins of the oxygen-evolving complex and a large number of cofactors. It forms dimeric complexes. The D1/D2 heterodimer binds P680, chlorophylls that are the primary electron donor of PSII, and subsequent electron acceptors. It shares a non-heme iron and each subunit binds pheophytin, quinone, additional chlorophylls, carotenoids and lipids. D1 provides most of the ligands for the Mn4-Ca-O5 cluster of the oxygen-evolving complex (OEC). There is also a Cl(-1) ion associated with D1 and D2, which is required for oxygen evolution. The PSII complex binds additional chlorophylls, carotenoids and specific lipids. serves as cofactor. Tyr-161 forms a radical intermediate that is referred to as redox-active TyrZ, YZ or Y-Z. Post-translationally, C-terminally processed by CTPA; processing is essential to allow assembly of the oxygen-evolving complex and thus photosynthetic growth.

The protein resides in the plastid. It localises to the chloroplast thylakoid membrane. The catalysed reaction is 2 a plastoquinone + 4 hnu + 2 H2O = 2 a plastoquinol + O2. Its function is as follows. Photosystem II (PSII) is a light-driven water:plastoquinone oxidoreductase that uses light energy to abstract electrons from H(2)O, generating O(2) and a proton gradient subsequently used for ATP formation. It consists of a core antenna complex that captures photons, and an electron transfer chain that converts photonic excitation into a charge separation. The D1/D2 (PsbA/PsbD) reaction center heterodimer binds P680, the primary electron donor of PSII as well as several subsequent electron acceptors. The protein is Photosystem II protein D1 of Glycine max (Soybean).